The chain runs to 259 residues: Ribosomal RNA small subunit methyltransferase J (259 aa).

S-adenosyl-L-methionine is bound by residues 101–102, 117–118, 153–154, and D176; these read RD, ER, and SS.

Belongs to the methyltransferase superfamily. RsmJ family.

It localises to the cytoplasm. The catalysed reaction is guanosine(1516) in 16S rRNA + S-adenosyl-L-methionine = N(2)-methylguanosine(1516) in 16S rRNA + S-adenosyl-L-homocysteine + H(+). Its function is as follows. Specifically methylates the guanosine in position 1516 of 16S rRNA. The polypeptide is Ribosomal RNA small subunit methyltransferase J (Aliivibrio fischeri (strain ATCC 700601 / ES114) (Vibrio fischeri)).